We begin with the raw amino-acid sequence, 191 residues long: Small ribosomal subunit protein eS7z (191 aa).

At Met1 the chain carries N-acetylmethionine. Positions Glu15 to Val50 form a coiled coil.

It belongs to the eukaryotic ribosomal protein eS7 family.

In Arabidopsis thaliana (Mouse-ear cress), this protein is Small ribosomal subunit protein eS7z (RPS7A).